The following is a 101-amino-acid chain: Large ribosomal subunit protein bL21 (101 aa).

It belongs to the bacterial ribosomal protein bL21 family. Part of the 50S ribosomal subunit. Contacts protein L20.

This protein binds to 23S rRNA in the presence of protein L20. The sequence is that of Large ribosomal subunit protein bL21 from Magnetococcus marinus (strain ATCC BAA-1437 / JCM 17883 / MC-1).